The following is a 72-amino-acid chain: Large ribosomal subunit protein bL31 (72 aa).

The protein belongs to the bacterial ribosomal protein bL31 family. Type A subfamily. Part of the 50S ribosomal subunit.

In terms of biological role, binds the 23S rRNA. The sequence is that of Large ribosomal subunit protein bL31 from Deinococcus geothermalis (strain DSM 11300 / CIP 105573 / AG-3a).